The following is a 702-amino-acid chain: Serotransferrin-A (702 aa).

The first 19 residues, M1–A19, serve as a signal peptide directing secretion. 2 Transferrin-like domains span residues V26 to E340 and V353 to K685. Cystine bridges form between C29-C64 and C39-C55. The Fe(3+) site is built by D79 and Y111. 3 disulfides stabilise this stretch: C134-C217, C179-C192, and C245-C259. The hydrogencarbonate site is built by T136, K140, A142, and G143. Fe(3+) is bound at residue Y211. Fe(3+) is bound at residue H267. Residues E340–A349 form a connecting region region. Intrachain disulfides connect C356–C388 and C366–C379. Residues D403 and Y442 each coordinate Fe(3+). 7 disulfide bridges follow: C413–C697, C431–C658, C465–C544, C489–C686, C499–C513, C510–C527, and C584–C598. Positions 467, 471, 473, and 474 each coordinate hydrogencarbonate. Y538 is a binding site for Fe(3+). H606 contributes to the Fe(3+) binding site.

The protein belongs to the transferrin family. In terms of assembly, monomer. In terms of tissue distribution, plasma.

It is found in the secreted. In terms of biological role, transferrins are iron binding transport proteins which can bind two Fe(3+) ions in association with the binding of an anion, usually bicarbonate. It is responsible for the transport of iron from sites of absorption and heme degradation to those of storage and utilization. Serum transferrin may also have a further role in stimulating cell proliferation. The sequence is that of Serotransferrin-A (tf-a) from Xenopus laevis (African clawed frog).